The sequence spans 236 residues: Calcium-binding lectin RapA2 (236 aa).

The protein resides in the secreted. In terms of biological role, interacts specifically in a calcium-dependent manner with the acidic exopolysaccharide (EPS) and capsular polysaccharide produced by R.leguminosarum. Could be involved in the development of the biofilm matrix made of EPS. The protein is Calcium-binding lectin RapA2 of Rhizobium johnstonii (strain DSM 114642 / LMG 32736 / 3841) (Rhizobium leguminosarum bv. viciae).